A 2269-amino-acid polypeptide reads, in one-letter code: Neuron navigator 3 (2269 aa).

The Calponin-homology (CH) domain maps to 55–162 (SKICKIYTDW…LFFILSRYKQ (108 aa)). Polar residues predominate over residues 186-207 (TGAAQLSQHKTQDMQSSLTARY). Disordered stretches follow at residues 186–358 (TGAA…RSML) and 388–532 (SEFG…NKGS). A compositionally biased stretch (low complexity) spans 236–252 (GSGSNSSKGSSNLNRRS). Polar residues-rich tracts occupy residues 267-291 (ASGN…QQLA) and 305-319 (SKSM…SSML). Positions 323–333 (PPSPTSSPTPP) are enriched in pro residues. The span at 346-356 (ASKSAPGNQRS) shows a compositional bias: polar residues. The span at 411-432 (PSASAFAPPSKSNNCKNHNNKS) shows a compositional bias: low complexity. The segment covering 505–518 (TATSKPAGTQSCVP) has biased composition (polar residues). Residues 644–672 (ETRRMRTVKNIADLRQNLEETMSSLRGTQ) are a coiled coil. 6 disordered regions span residues 692–737 (GRGL…STTV), 756–776 (ASGA…VGPE), 836–1036 (VKEM…IPGP), 1050–1079 (SGSA…TSLD), 1097–1412 (VPLQ…GTTC), and 1461–1487 (GGSA…TDEV). Polar residues-rich tracts occupy residues 699–716 (SSRS…SSPR) and 727–737 (PPRSSAGSTTV). The span at 847–860 (DSSSVSSGLSDTLD) shows a compositional bias: low complexity. Polar residues predominate over residues 874-886 (GISSRKSKAAQSN). Over residues 919–932 (PSCKWKTSSPSSSC) the composition is skewed to low complexity. Over residues 939–950 (QKTGLPMSQTGS) the composition is skewed to polar residues. Residues 977–989 (GKTDDAKASEKGK) are compositionally biased toward basic and acidic residues. A compositionally biased stretch (low complexity) spans 1110-1137 (SSSGGSSVVSRSGHRSSSSSIDSNVSGK). Positions 1163–1172 (GRSSPVTINQ) are enriched in polar residues. Low complexity-rich tracts occupy residues 1185 to 1202 (GTGL…TQSG) and 1223 to 1234 (GSKASSKPSSPG). Positions 1266–1276 (GSLGSMGGQSG) are enriched in gly residues. Over residues 1292–1305 (SPASSPASGLSLPS) the composition is skewed to low complexity. Polar residues-rich tracts occupy residues 1313-1339 (NLSS…SSES) and 1354-1363 (RTGSVKSTLS). The span at 1381–1391 (TSHEEGKEWLR) shows a compositional bias: basic and acidic residues. The segment covering 1392–1412 (SHSTGGLQDTGSPLSPPGTTC) has biased composition (polar residues). A coiled-coil region spans residues 1499 to 1586 (SSLYSAQIRK…TDAQTAIQVA (88 aa)). Disordered regions lie at residues 1602-1672 (QHSS…PSSP), 1756-1792 (NDRL…SRQS), and 2207-2269 (GYSS…ESAL). Composition is skewed to low complexity over residues 1605 to 1623 (SESM…LGSA) and 1765 to 1792 (TTPA…SRQS). Residues 1697-1765 (CECTEAEAEI…NDRLKSSGNT (69 aa)) adopt a coiled-coil conformation. Polar residues predominate over residues 2208 to 2224 (YSSSKDGAASKQVSQSD).

It belongs to the Nav/unc-53 family. In terms of assembly, interacts with F-actin.

It localises to the nucleus outer membrane. The protein resides in the golgi apparatus. The protein localises to the cell projection. It is found in the lamellipodium. Its subcellular location is the filopodium. Functionally, involved in liver and heart organogenesis during embryo development. Plays a role in the migration of hepatoblasts from the intestinal endoderm during liver organogenesis; possibly by modulating actin polymerization during hepatoblast outgrowth. May be involved in neuron regeneration. The chain is Neuron navigator 3 (nav3) from Danio rerio (Zebrafish).